The sequence spans 364 residues: tRNA N6-adenosine threonylcarbamoyltransferase (364 aa).

Fe cation is bound by residues H115 and H119. Residues 137–141 (LVSGG), D170, G183, and N288 each bind substrate. Residue D316 participates in Fe cation binding.

Belongs to the KAE1 / TsaD family. Requires Fe(2+) as cofactor.

Its subcellular location is the cytoplasm. It catalyses the reaction L-threonylcarbamoyladenylate + adenosine(37) in tRNA = N(6)-L-threonylcarbamoyladenosine(37) in tRNA + AMP + H(+). In terms of biological role, required for the formation of a threonylcarbamoyl group on adenosine at position 37 (t(6)A37) in tRNAs that read codons beginning with adenine. Is involved in the transfer of the threonylcarbamoyl moiety of threonylcarbamoyl-AMP (TC-AMP) to the N6 group of A37, together with TsaE and TsaB. TsaD likely plays a direct catalytic role in this reaction. In Bartonella tribocorum (strain CIP 105476 / IBS 506), this protein is tRNA N6-adenosine threonylcarbamoyltransferase.